The chain runs to 231 residues: MVKSMQQIAMTQQKTLDQVRTFMARTYSWMAAGLALTAGVAYLTAQNEGLAMQVASLRLPLMLAQLALVFVLSMFAQRLSAAVAGALFVGYAALTGLTFSALLFAYSPAAVITAFAVSAGTFGLMSVAGFVIKKDLSAMGRFFLFAVLGLVVAMLVNLFVGSSALSLGISMIGVFLFAGLTAYDTQMLRNLALSGISGEQAERASINGALALYLDFINIFLFLLNIGNSRD.

The next 7 helical transmembrane spans lie at 26–46 (TYSW…LTAQ), 56–76 (SLRL…SMFA), 84–104 (AGAL…ALLF), 112–132 (ITAF…GFVI), 142–162 (FFLF…FVGS), 163–183 (SALS…LTAY), and 206–226 (INGA…LLNI).

Belongs to the BI1 family.

The protein localises to the cell membrane. This is an uncharacterized protein from Deinococcus radiodurans (strain ATCC 13939 / DSM 20539 / JCM 16871 / CCUG 27074 / LMG 4051 / NBRC 15346 / NCIMB 9279 / VKM B-1422 / R1).